The following is a 271-amino-acid chain: DNA-directed RNA polymerase subunit Rpo3 (271 aa).

It belongs to the archaeal Rpo3/eukaryotic RPB3 RNA polymerase subunit family. In terms of assembly, part of the RNA polymerase complex.

The protein resides in the cytoplasm. The catalysed reaction is RNA(n) + a ribonucleoside 5'-triphosphate = RNA(n+1) + diphosphate. In terms of biological role, DNA-dependent RNA polymerase (RNAP) catalyzes the transcription of DNA into RNA using the four ribonucleoside triphosphates as substrates. This is DNA-directed RNA polymerase subunit Rpo3 from Thermoplasma volcanium (strain ATCC 51530 / DSM 4299 / JCM 9571 / NBRC 15438 / GSS1).